The sequence spans 1051 residues: Carbamoyl phosphate synthase large chain (1051 aa).

The tract at residues 1–399 (MKETPKKVLV…SLQKAVRMLD (399 aa)) is carboxyphosphate synthetic domain. ATP-binding residues include R127, R167, G173, G174, K206, L208, E213, G239, V240, H241, Q282, and E296. The region spanning 131–325 (RETMIENNLP…LAYVSAKLAL (195 aa)) is the ATP-grasp 1 domain. Residues Q282, E296, and N298 each contribute to the Mg(2+) site. Residues Q282, E296, and N298 each coordinate Mn(2+). The tract at residues 400–548 (IGEPGVVGGK…LTYNGTEDDL (149 aa)) is oligomerization domain. The tract at residues 549–930 (EFSQGNKLLI…LKSWLSSIPN (382 aa)) is carbamoyl phosphate synthetic domain. Residues 673-863 (SKLLDKLGIS…LINESMKAIF (191 aa)) enclose the ATP-grasp 2 domain. 10 residues coordinate ATP: R709, K748, I750, E755, G779, V780, H781, S782, Q822, and E834. Residues Q822, E834, and N836 each coordinate Mg(2+). The Mn(2+) site is built by Q822, E834, and N836. Residues 930 to 1051 (NRIPNKNGIA…FEISEYGGGI (122 aa)) form the MGS-like domain. The segment at 931 to 1051 (RIPNKNGIAL…FEISEYGGGI (121 aa)) is allosteric domain.

It belongs to the CarB family. In terms of assembly, composed of two chains; the small (or glutamine) chain promotes the hydrolysis of glutamine to ammonia, which is used by the large (or ammonia) chain to synthesize carbamoyl phosphate. Tetramer of heterodimers (alpha,beta)4. Mg(2+) serves as cofactor. Mn(2+) is required as a cofactor.

It catalyses the reaction hydrogencarbonate + L-glutamine + 2 ATP + H2O = carbamoyl phosphate + L-glutamate + 2 ADP + phosphate + 2 H(+). The catalysed reaction is hydrogencarbonate + NH4(+) + 2 ATP = carbamoyl phosphate + 2 ADP + phosphate + 2 H(+). It functions in the pathway amino-acid biosynthesis; L-arginine biosynthesis; carbamoyl phosphate from bicarbonate: step 1/1. Its pathway is pyrimidine metabolism; UMP biosynthesis via de novo pathway; (S)-dihydroorotate from bicarbonate: step 1/3. Its function is as follows. Large subunit of the glutamine-dependent carbamoyl phosphate synthetase (CPSase). CPSase catalyzes the formation of carbamoyl phosphate from the ammonia moiety of glutamine, carbonate, and phosphate donated by ATP, constituting the first step of 2 biosynthetic pathways, one leading to arginine and/or urea and the other to pyrimidine nucleotides. The large subunit (synthetase) binds the substrates ammonia (free or transferred from glutamine from the small subunit), hydrogencarbonate and ATP and carries out an ATP-coupled ligase reaction, activating hydrogencarbonate by forming carboxy phosphate which reacts with ammonia to form carbamoyl phosphate. This chain is Carbamoyl phosphate synthase large chain, found in Saccharolobus islandicus (strain M.16.27) (Sulfolobus islandicus).